A 217-amino-acid chain; its full sequence is Ribonuclease HII (217 aa).

Residues 27 to 216 (SQVAGVDEAG…VKESIQEGVC (190 aa)) form the RNase H type-2 domain. A divalent metal cation contacts are provided by Asp33, Glu34, and Asp126.

It belongs to the RNase HII family. It depends on Mn(2+) as a cofactor. Requires Mg(2+) as cofactor.

It is found in the cytoplasm. The catalysed reaction is Endonucleolytic cleavage to 5'-phosphomonoester.. In terms of biological role, endonuclease that specifically degrades the RNA of RNA-DNA hybrids. This is Ribonuclease HII (rnhB) from Chlamydia trachomatis serovar D (strain ATCC VR-885 / DSM 19411 / UW-3/Cx).